The following is a 351-amino-acid chain: GTPase Obg (351 aa).

Residues 1 to 159 (MKFLDQCKIY…RWVWLRLKLI (159 aa)) enclose the Obg domain. In terms of domain architecture, OBG-type G spans 160 to 327 (ADAGLVGLPN…MLFELLRHIR (168 aa)). GTP is bound by residues 166 to 173 (GLPNAGKS), 191 to 195 (FTTLT), 212 to 215 (DIPG), 279 to 282 (NKID), and 308 to 310 (SGA). Residues serine 173 and threonine 193 each coordinate Mg(2+).

The protein belongs to the TRAFAC class OBG-HflX-like GTPase superfamily. OBG GTPase family. In terms of assembly, monomer. The cofactor is Mg(2+).

Its subcellular location is the cytoplasm. In terms of biological role, an essential GTPase which binds GTP, GDP and possibly (p)ppGpp with moderate affinity, with high nucleotide exchange rates and a fairly low GTP hydrolysis rate. Plays a role in control of the cell cycle, stress response, ribosome biogenesis and in those bacteria that undergo differentiation, in morphogenesis control. This chain is GTPase Obg, found in Rhodospirillum centenum (strain ATCC 51521 / SW).